The primary structure comprises 525 residues: uncharacterized protein (525 aa).

Ser55 carries the phosphoserine modification. The next 13 membrane-spanning stretches (helical) occupy residues 81–101, 120–140, 147–167, 173–193, 208–228, 238–258, 295–315, 318–338, 350–370, 388–408, 413–433, 454–474, and 484–504; these read AYIVLLSTSLQMYVFWTPNFY, LLGQSMFVLGVALGPLFLGPL, KLVYIGSLIIYVCFCISCALA, LVISMLIMGVVGSTALGNVAG, MYMFIFMCSVASVGSPMGTGV, WLYWIDVIVGGFFIILFVFTP, FVFFMAIKIFFSEPIVSSLGI, GFVNGLLYFFLQAIWPVYFSI, YMAAMPACVILLWFEPLQCWL, FIMTLFYVWGFPIGIFMFAFC, IHYIVSLIGLTIFNIADYHIW, AFELPSNLGAVGFIHLSALMF, and AVVGFASLPLIALIYALYFYG.

This sequence belongs to the major facilitator superfamily. CAR1 family.

It localises to the membrane. This is an uncharacterized protein from Schizosaccharomyces pombe (strain 972 / ATCC 24843) (Fission yeast).